Here is a 390-residue protein sequence, read N- to C-terminus: Coenzyme A biosynthesis bifunctional protein CoaBC (390 aa).

The interval 1–188 (MDKNKHILIG…NQKDYLKNKK (188 aa)) is phosphopantothenoylcysteine decarboxylase. Cys-156 (proton donor) is an active-site residue. Residues 189 to 390 (ILITASRTEE…VAKEILKILY (202 aa)) form a phosphopantothenate--cysteine ligase region. CTP-binding positions include Asp-277, Lys-287, 304 to 307 (PDII), Phe-323, Lys-338, and Lys-342.

This sequence in the N-terminal section; belongs to the HFCD (homo-oligomeric flavin containing Cys decarboxylase) superfamily. In the C-terminal section; belongs to the PPC synthetase family. Mg(2+) serves as cofactor. FMN is required as a cofactor.

The catalysed reaction is N-[(R)-4-phosphopantothenoyl]-L-cysteine + H(+) = (R)-4'-phosphopantetheine + CO2. It carries out the reaction (R)-4'-phosphopantothenate + L-cysteine + CTP = N-[(R)-4-phosphopantothenoyl]-L-cysteine + CMP + diphosphate + H(+). Its pathway is cofactor biosynthesis; coenzyme A biosynthesis; CoA from (R)-pantothenate: step 2/5. It participates in cofactor biosynthesis; coenzyme A biosynthesis; CoA from (R)-pantothenate: step 3/5. Catalyzes two sequential steps in the biosynthesis of coenzyme A. In the first step cysteine is conjugated to 4'-phosphopantothenate to form 4-phosphopantothenoylcysteine. In the second step the latter compound is decarboxylated to form 4'-phosphopantotheine. This chain is Coenzyme A biosynthesis bifunctional protein CoaBC, found in Borreliella burgdorferi (strain ATCC 35210 / DSM 4680 / CIP 102532 / B31) (Borrelia burgdorferi).